Consider the following 103-residue polypeptide: Putative membrane protein insertion efficiency factor (103 aa).

The protein belongs to the UPF0161 family.

The protein localises to the cell inner membrane. In terms of biological role, could be involved in insertion of integral membrane proteins into the membrane. The sequence is that of Putative membrane protein insertion efficiency factor from Chlamydia pneumoniae (Chlamydophila pneumoniae).